Consider the following 223-residue polypeptide: Endo-1,4-beta-xylanase 2 (223 aa).

An N-terminal signal peptide occupies residues 1 to 19 (MVSFTSLLAGVAAISGVLA). Positions 20 to 33 (APAAEVESVAVEKR) are excised as a propeptide. The residue at position 34 (Gln-34) is a Pyrrolidone carboxylic acid. Positions 34-222 (QTIQPGTGYN…FSSGSASITV (189 aa)) constitute a GH11 domain. Residues Asn-71 and Asn-94 are each glycosylated (N-linked (GlcNAc...) asparagine). 2 residues coordinate substrate: Tyr-106 and Tyr-110. Glu-119 functions as the Nucleophile in the catalytic mechanism. Tyr-121, Arg-155, Pro-159, Gln-169, and Tyr-204 together coordinate substrate. Residue Glu-210 is the Proton donor of the active site.

It belongs to the glycosyl hydrolase 11 (cellulase G) family.

The protein localises to the secreted. It catalyses the reaction Endohydrolysis of (1-&gt;4)-beta-D-xylosidic linkages in xylans.. It functions in the pathway glycan degradation; xylan degradation. In terms of biological role, glycoside hydrolase involved in the hydrolysis of xylan, a major plant cell wall hemicellulose made up of 1,4-beta-linked D-xylopyranose residues. Catalyzes the endohydrolysis of the main-chain 1,4-beta-glycosidic bonds connecting the xylose subunits yielding various xylooligosaccharides and xylose. The catalysis proceeds by a double-displacement reaction mechanism with a putative covalent glycosyl-enzyme intermediate, with retention of the anomeric configuration. Produces xylobiose and xylose as the main degradation products. In Hypocrea jecorina (strain ATCC 56765 / BCRC 32924 / NRRL 11460 / Rut C-30) (Trichoderma reesei), this protein is Endo-1,4-beta-xylanase 2.